We begin with the raw amino-acid sequence, 269 residues long: C-type lectin domain family 2 member G (269 aa).

The Cytoplasmic segment spans residues 1 to 107 (MNITRASLPM…SPESSAKLYC (107 aa)). Residues 108 to 128 (CCGVIMVLTVAVVALSVALPA) traverse the membrane as a helical; Signal-anchor for type II membrane protein segment. Over 129–269 (TKTEQILINK…SLHCPTPVPV (141 aa)) the chain is Extracellular. Residues 150–254 (VGNKCFYFSE…HYIPRIWICS (105 aa)) form the C-type lectin domain. An N-linked (GlcNAc...) asparagine glycan is attached at N163. The cysteines at positions 171 and 253 are disulfide-linked.

As to expression, detected in vagina, eye, tongue, stomach and spleen.

It is found in the cell membrane. Inhibits osteoclast formation. This Mus musculus (Mouse) protein is C-type lectin domain family 2 member G (Clec2g).